Reading from the N-terminus, the 122-residue chain is uncharacterized protein (122 aa).

The N-terminal stretch at 1–22 is a signal peptide; the sequence is MNMMRIFYIGLSGVGMMFSSMA.

This is an uncharacterized protein from Escherichia coli (strain K12).